A 215-amino-acid chain; its full sequence is 5'-deoxynucleotidase YGK1 (215 aa).

In terms of domain architecture, HD spans 58–164 (ISDHMYRMGL…VKDIDKYEML (107 aa)). Residues H61, H89, D90, E93, D98, I99, and D159 each contribute to the a divalent metal cation site.

This sequence belongs to the HDDC2 family. As to quaternary structure, homodimer. Mn(2+) is required as a cofactor. Co(2+) serves as cofactor. Requires Mg(2+) as cofactor.

The catalysed reaction is a 2'-deoxyribonucleoside 5'-phosphate + H2O = a 2'-deoxyribonucleoside + phosphate. In terms of biological role, catalyzes the dephosphorylation of the nucleoside 5'-monophosphates deoxyadenosine monophosphate (dAMP), deoxycytidine monophosphate (dCMP), deoxyguanosine monophosphate (dGMP) and deoxythymidine monophosphate (dTMP). The sequence is that of 5'-deoxynucleotidase YGK1 from Saccharomyces cerevisiae (strain ATCC 204508 / S288c) (Baker's yeast).